The sequence spans 37 residues: Large ribosomal subunit protein bL36 (37 aa).

This sequence belongs to the bacterial ribosomal protein bL36 family.

The sequence is that of Large ribosomal subunit protein bL36 from Nostoc sp. (strain PCC 7120 / SAG 25.82 / UTEX 2576).